The sequence spans 333 residues: GDP-mannose transporter GONST1 (333 aa).

9 helical membrane passes run 33-55 (ALLS…KFVL), 62-84 (AGIF…LSLM), 99-121 (VWFP…LKYI), 153-170 (VWAA…GGIT), 174-196 (FNAV…SLTL), 216-238 (SMVL…FFNE), 253-275 (FWMV…MWFL), 282-304 (TYSL…LFNV), and 308-325 (LQNS…VVFA).

The protein belongs to the nucleotide-sugar transporter family. GDP-Mannose:GMP antiporter (GMA) (TC 2.A.7.13) subfamily.

The protein localises to the golgi apparatus membrane. Functionally, involved in the import of GDP-mannose from the cytoplasm into the Golgi lumen. Required for the luminal synthesis of a variety of plant cell surface components. Is required for the correct mannosylation of the glycosylinositol phosphoceramides (GIPC). Can indifferently transport GDP-mannose, GDP-Glucose, GDP-Fucose or GDP-Galactose in vitro. The protein is GDP-mannose transporter GONST1 of Arabidopsis thaliana (Mouse-ear cress).